The chain runs to 158 residues: SsrA-binding protein (158 aa).

A disordered region spans residues 131-158 (GKKTHDKRETEKKRDWNREKARLLRDRG). A compositionally biased stretch (basic and acidic residues) spans 136–158 (DKRETEKKRDWNREKARLLRDRG).

This sequence belongs to the SmpB family.

It localises to the cytoplasm. Required for rescue of stalled ribosomes mediated by trans-translation. Binds to transfer-messenger RNA (tmRNA), required for stable association of tmRNA with ribosomes. tmRNA and SmpB together mimic tRNA shape, replacing the anticodon stem-loop with SmpB. tmRNA is encoded by the ssrA gene; the 2 termini fold to resemble tRNA(Ala) and it encodes a 'tag peptide', a short internal open reading frame. During trans-translation Ala-aminoacylated tmRNA acts like a tRNA, entering the A-site of stalled ribosomes, displacing the stalled mRNA. The ribosome then switches to translate the ORF on the tmRNA; the nascent peptide is terminated with the 'tag peptide' encoded by the tmRNA and targeted for degradation. The ribosome is freed to recommence translation, which seems to be the essential function of trans-translation. This Brucella ovis (strain ATCC 25840 / 63/290 / NCTC 10512) protein is SsrA-binding protein.